The primary structure comprises 154 residues: MVKAVCVLRGDAKVAGTVTFEQESESAPTTITWDITGNDPNAERGFHIHTFGDNTNGCTSAGPHFNPHGKTHGAPTDAARHVGDLGNIKTDGQGNAKGSVQDSHVKLIGPHSVVGRTVVVHGGTDDLGKGGNEESLKTGNAGPRPACGVIGVAN.

Residues H47, H49, and H64 each contribute to the Cu cation site. C58 and C147 are joined by a disulfide. Residues H64, H72, H81, and D84 each coordinate Zn(2+). H121 serves as a coordination point for Cu cation. The interval 122–143 is disordered; sequence GGTDDLGKGGNEESLKTGNAGP. The segment covering 123-136 has biased composition (basic and acidic residues); the sequence is GTDDLGKGGNEESL. Substrate is bound at residue R144.

This sequence belongs to the Cu-Zn superoxide dismutase family. In terms of assembly, homodimer. Requires Cu cation as cofactor. Zn(2+) is required as a cofactor.

The protein resides in the cytoplasm. The catalysed reaction is 2 superoxide + 2 H(+) = H2O2 + O2. In terms of biological role, destroys radicals which are normally produced within the cells and which are toxic to biological systems. The chain is Superoxide dismutase [Cu-Zn] (SOD1) from Cordyceps militaris (Caterpillar fungus).